Consider the following 113-residue polypeptide: DNA-directed RNA polymerase subunit omega (113 aa).

It belongs to the RNA polymerase subunit omega family. In terms of assembly, the RNAP catalytic core consists of 2 alpha, 1 beta, 1 beta' and 1 omega subunit. When a sigma factor is associated with the core the holoenzyme is formed, which can initiate transcription.

It carries out the reaction RNA(n) + a ribonucleoside 5'-triphosphate = RNA(n+1) + diphosphate. Promotes RNA polymerase assembly. Latches the N- and C-terminal regions of the beta' subunit thereby facilitating its interaction with the beta and alpha subunits. This Rhizorhabdus wittichii (strain DSM 6014 / CCUG 31198 / JCM 15750 / NBRC 105917 / EY 4224 / RW1) (Sphingomonas wittichii) protein is DNA-directed RNA polymerase subunit omega.